A 282-amino-acid chain; its full sequence is 3-hydroxyanthranilate 3,4-dioxygenase (282 aa).

A domain A (catalytic) region spans residues 1-160 (MAMAINVKKW…SKQYKSGKPD (160 aa)). Arginine 43 lines the O2 pocket. Residues histidine 47, glutamate 53, and histidine 91 each coordinate Fe cation. A substrate-binding site is contributed by glutamate 53. Substrate-binding residues include arginine 95 and glutamate 105. The segment at 161 to 177 (PDQPKAKMPFCLSTEQV) is linker. The interval 178–282 (MEPFSFQHWL…LSTSQVPLPM (105 aa)) is domain B.

This sequence belongs to the 3-HAO family. As to quaternary structure, monomer. Fe(2+) serves as cofactor.

It is found in the cytoplasm. It localises to the cytosol. It catalyses the reaction 3-hydroxyanthranilate + O2 = (2Z,4Z)-2-amino-3-carboxymuconate 6-semialdehyde. It participates in cofactor biosynthesis; NAD(+) biosynthesis; quinolinate from L-kynurenine: step 3/3. Functionally, catalyzes the oxidative ring opening of 3-hydroxyanthranilate to 2-amino-3-carboxymuconate semialdehyde, which spontaneously cyclizes to quinolinate. The chain is 3-hydroxyanthranilate 3,4-dioxygenase (haao) from Xenopus laevis (African clawed frog).